A 115-amino-acid chain; its full sequence is Large ribosomal subunit protein uL18 (115 aa).

Residues 1–24 (MISKPDKNKLRQKRHTRVRGKISG) form a disordered region. The segment covering 10 to 20 (LRQKRHTRVRG) has biased composition (basic residues).

Belongs to the universal ribosomal protein uL18 family. In terms of assembly, part of the 50S ribosomal subunit; part of the 5S rRNA/L5/L18/L25 subcomplex. Contacts the 5S and 23S rRNAs.

Its function is as follows. This is one of the proteins that bind and probably mediate the attachment of the 5S RNA into the large ribosomal subunit, where it forms part of the central protuberance. The sequence is that of Large ribosomal subunit protein uL18 from Lactococcus lactis subsp. cremoris (strain MG1363).